Here is a 400-residue protein sequence, read N- to C-terminus: Putative cytochrome P450 141 (400 aa).

Transmembrane regions (helical) follow at residues 225-245 and 294-314; these read VVGM…AVIT and VVIA…ITSA. Cys-346 is a binding site for heme.

It belongs to the cytochrome P450 family. The cofactor is heme.

It localises to the cell membrane. This Mycobacterium tuberculosis (strain CDC 1551 / Oshkosh) protein is Putative cytochrome P450 141 (cyp141).